A 301-amino-acid polypeptide reads, in one-letter code: Glutamyl-Q tRNA(Asp) synthetase (301 aa).

L-glutamate-binding positions include 8-12 (RFAPS) and Glu-44. The 'HIGH' region signature appears at 11 to 21 (PSPTGPLHFGS). Zn(2+) is bound by residues Cys-100, Cys-102, Tyr-122, and Cys-126. Positions 180 and 198 each coordinate L-glutamate. The 'KMSKS' region motif lies at 236 to 240 (KLSKQ). Lys-239 contacts ATP.

It belongs to the class-I aminoacyl-tRNA synthetase family. GluQ subfamily. Requires Zn(2+) as cofactor.

Catalyzes the tRNA-independent activation of glutamate in presence of ATP and the subsequent transfer of glutamate onto a tRNA(Asp). Glutamate is transferred on the 2-amino-5-(4,5-dihydroxy-2-cyclopenten-1-yl) moiety of the queuosine in the wobble position of the QUC anticodon. The chain is Glutamyl-Q tRNA(Asp) synthetase from Dechloromonas aromatica (strain RCB).